The primary structure comprises 216 residues: Methylthioribulose-1-phosphate dehydratase (216 aa).

2 residues coordinate Zn(2+): H101 and H103.

The protein belongs to the aldolase class II family. MtnB subfamily. Zn(2+) serves as cofactor.

It carries out the reaction 5-(methylsulfanyl)-D-ribulose 1-phosphate = 5-methylsulfanyl-2,3-dioxopentyl phosphate + H2O. It functions in the pathway amino-acid biosynthesis; L-methionine biosynthesis via salvage pathway; L-methionine from S-methyl-5-thio-alpha-D-ribose 1-phosphate: step 2/6. Catalyzes the dehydration of methylthioribulose-1-phosphate (MTRu-1-P) into 2,3-diketo-5-methylthiopentyl-1-phosphate (DK-MTP-1-P). This chain is Methylthioribulose-1-phosphate dehydratase, found in Bradyrhizobium sp. (strain BTAi1 / ATCC BAA-1182).